The following is a 288-amino-acid chain: Phenazine biosynthesis-like domain-containing protein 2 (288 aa).

Residue glutamate 46 is part of the active site.

It belongs to the PhzF family.

This is Phenazine biosynthesis-like domain-containing protein 2 (Pbld2) from Mus musculus (Mouse).